Consider the following 433-residue polypeptide: Enolase (433 aa).

Glutamine 167 serves as a coordination point for (2R)-2-phosphoglycerate. Glutamate 209 functions as the Proton donor in the catalytic mechanism. Mg(2+) is bound by residues aspartate 246, glutamate 291, and aspartate 318. Positions 343, 372, 373, and 394 each coordinate (2R)-2-phosphoglycerate. The active-site Proton acceptor is lysine 343.

It belongs to the enolase family. As to quaternary structure, component of the RNA degradosome, a multiprotein complex involved in RNA processing and mRNA degradation. It depends on Mg(2+) as a cofactor.

The protein resides in the cytoplasm. Its subcellular location is the secreted. It is found in the cell surface. It catalyses the reaction (2R)-2-phosphoglycerate = phosphoenolpyruvate + H2O. Its pathway is carbohydrate degradation; glycolysis; pyruvate from D-glyceraldehyde 3-phosphate: step 4/5. In terms of biological role, catalyzes the reversible conversion of 2-phosphoglycerate (2-PG) into phosphoenolpyruvate (PEP). It is essential for the degradation of carbohydrates via glycolysis. In Photobacterium profundum (strain SS9), this protein is Enolase.